A 798-amino-acid polypeptide reads, in one-letter code: ABC transporter G family member 4 (798 aa).

The disordered stretch occupies residues M1–Q51. Over residues I12 to S29 the composition is skewed to basic and acidic residues. The span at R30–N41 shows a compositional bias: polar residues. Residues N34–T83 adopt a coiled-coil conformation. A compositionally biased stretch (low complexity) spans Q42–Q51. One can recognise an ABC transporter domain in the interval I211 to P464. G253–S260 provides a ligand contact to ATP. 7 helical membrane-spanning segments follow: residues V540 to F560, L579 to V599, I628 to L648, I656 to M676, F687 to I707, S713 to I733, and S771 to Y791. An ABC transmembrane type-2 domain is found at V540–F793.

It belongs to the ABC transporter superfamily. ABCG family. Eye pigment precursor importer (TC 3.A.1.204) subfamily.

The protein localises to the membrane. The protein is ABC transporter G family member 4 (abcG4) of Dictyostelium discoideum (Social amoeba).